The following is a 429-amino-acid chain: Enolase (429 aa).

Gln-164 contacts (2R)-2-phosphoglycerate. The active-site Proton donor is the Glu-206. Residues Asp-243, Glu-286, and Asp-313 each coordinate Mg(2+). (2R)-2-phosphoglycerate contacts are provided by Lys-338, Arg-367, Ser-368, and Lys-389. Catalysis depends on Lys-338, which acts as the Proton acceptor.

This sequence belongs to the enolase family. Homooctamer. Forms a ring-shaped particle. Mg(2+) serves as cofactor.

Its subcellular location is the cytoplasm. The protein resides in the secreted. It is found in the cell surface. It carries out the reaction (2R)-2-phosphoglycerate = phosphoenolpyruvate + H2O. The protein operates within carbohydrate degradation; glycolysis; pyruvate from D-glyceraldehyde 3-phosphate: step 4/5. With respect to regulation, inhibited by fluoride and phosphate. Functionally, catalyzes the reversible conversion of 2-phosphoglycerate (2-PG) into phosphoenolpyruvate (PEP). It is essential for the degradation of carbohydrates via glycolysis. The polypeptide is Enolase (Thermotoga maritima (strain ATCC 43589 / DSM 3109 / JCM 10099 / NBRC 100826 / MSB8)).